A 356-amino-acid chain; its full sequence is Dual-specificity RNA methyltransferase RlmN (356 aa).

Residue Glu92 is the Proton acceptor of the active site. The Radical SAM core domain maps to 98–334 (EKDRGTLCIS…MRRTRGEDID (237 aa)). The cysteines at positions 105 and 337 are disulfide-linked. [4Fe-4S] cluster is bound by residues Cys112, Cys116, and Cys119. Residues 162 to 163 (GE), Ser194, 216 to 218 (SLH), and Asn294 each bind S-adenosyl-L-methionine. Cys337 (S-methylcysteine intermediate) is an active-site residue.

It belongs to the radical SAM superfamily. RlmN family. Requires [4Fe-4S] cluster as cofactor.

Its subcellular location is the cytoplasm. It carries out the reaction adenosine(2503) in 23S rRNA + 2 reduced [2Fe-2S]-[ferredoxin] + 2 S-adenosyl-L-methionine = 2-methyladenosine(2503) in 23S rRNA + 5'-deoxyadenosine + L-methionine + 2 oxidized [2Fe-2S]-[ferredoxin] + S-adenosyl-L-homocysteine. It catalyses the reaction adenosine(37) in tRNA + 2 reduced [2Fe-2S]-[ferredoxin] + 2 S-adenosyl-L-methionine = 2-methyladenosine(37) in tRNA + 5'-deoxyadenosine + L-methionine + 2 oxidized [2Fe-2S]-[ferredoxin] + S-adenosyl-L-homocysteine. Specifically methylates position 2 of adenine 2503 in 23S rRNA and position 2 of adenine 37 in tRNAs. m2A2503 modification seems to play a crucial role in the proofreading step occurring at the peptidyl transferase center and thus would serve to optimize ribosomal fidelity. This is Dual-specificity RNA methyltransferase RlmN from Vesicomyosocius okutanii subsp. Calyptogena okutanii (strain HA).